The sequence spans 390 residues: 8-amino-7-oxononanoate synthase (390 aa).

R19 provides a ligand contact to substrate. 106–107 is a pyridoxal 5'-phosphate binding site; the sequence is GY. Residue H131 coordinates substrate. 3 residues coordinate pyridoxal 5'-phosphate: S176, H204, and T233. The residue at position 236 (K236) is an N6-(pyridoxal phosphate)lysine. T350 is a substrate binding site.

The protein belongs to the class-II pyridoxal-phosphate-dependent aminotransferase family. BioF subfamily. Homodimer. It depends on pyridoxal 5'-phosphate as a cofactor.

The catalysed reaction is 6-carboxyhexanoyl-[ACP] + L-alanine + H(+) = (8S)-8-amino-7-oxononanoate + holo-[ACP] + CO2. It participates in cofactor biosynthesis; biotin biosynthesis. Functionally, catalyzes the decarboxylative condensation of pimeloyl-[acyl-carrier protein] and L-alanine to produce 8-amino-7-oxononanoate (AON), [acyl-carrier protein], and carbon dioxide. In Pseudomonas putida (strain GB-1), this protein is 8-amino-7-oxononanoate synthase.